A 612-amino-acid polypeptide reads, in one-letter code: FAD-linked oxidoreductase easE (612 aa).

One can recognise an FAD-binding PCMH-type domain in the interval His-129 to Asp-313.

It belongs to the oxygen-dependent FAD-linked oxidoreductase family. It depends on FAD as a cofactor.

It participates in alkaloid biosynthesis; ergot alkaloid biosynthesis. Its function is as follows. FAD-linked oxidoreductase; part of the gene cluster that mediates the biosynthesis of fungal ergot alkaloid. DmaW catalyzes the first step of ergot alkaloid biosynthesis by condensing dimethylallyl diphosphate (DMAP) and tryptophan to form 4-dimethylallyl-L-tryptophan. The second step is catalyzed by the methyltransferase easF that methylates 4-dimethylallyl-L-tryptophan in the presence of S-adenosyl-L-methionine, resulting in the formation of 4-dimethylallyl-L-abrine. The catalase easC and the FAD-dependent oxidoreductase easE then transform 4-dimethylallyl-L-abrine to chanoclavine-I which is further oxidized by easD in the presence of NAD(+), resulting in the formation of chanoclavine-I aldehyde. Chanoclavine-I aldehyde is the precursor of ergoamides and ergopeptines in Clavicipitaceae, and clavine-type alcaloids such as fumiclavine in Trichocomaceae. However, the metabolites downstream of chanoclavine-I aldehyde in Arthrodermataceae have not been identified yet. This chain is FAD-linked oxidoreductase easE, found in Arthroderma otae (strain ATCC MYA-4605 / CBS 113480) (Microsporum canis).